The primary structure comprises 780 residues: Pendrin (780 aa).

Residues 1–87 (MAAPGGRSEP…YRVKEWLLSD (87 aa)) are Cytoplasmic-facing. Residues 88–108 (VISGVSTGLVATLQGMAYALL) form a helical membrane-spanning segment. Residue Ala109 is a topological domain, extracellular. The chain crosses the membrane as a helical span at residues 110–130 (AVPVGYGLYSAFFPILTYFIF). Over 131–135 (GTSRH) the chain is Cytoplasmic. A helical transmembrane segment spans residues 136–156 (ISVGPFPVVSLMVGSVVLSMA). Residues 157 to 191 (PDEHFLVSSSNGTVLNTTMIDTAARDTARVLIASA) lie on the Extracellular side of the membrane. The chain crosses the membrane as a helical span at residues 192–212 (LTLLVGIIQLIFGGLQIGFIV). Residues 213 to 218 (RYLADP) lie on the Cytoplasmic side of the membrane. The helical transmembrane segment at 219 to 239 (LVGGFTTAAAFQVLVSQLKIV) threads the bilayer. Residues 240–263 (LNVSTKNYNGVLSIIYTLVEIFQN) lie on the Extracellular side of the membrane. The chain crosses the membrane as a helical span at residues 264–284 (IGDTNLADFTAGLLTIVVCMA). Residues 285-295 (VKELNDRFRHK) are Cytoplasmic-facing. The chain crosses the membrane as a helical span at residues 296–316 (IPVPIPIEVIVTIIATAISYG). At 317-344 (ANLEKNYNAGIVKSIPRGFLPPELPPVS) the chain is on the extracellular side. A helical transmembrane segment spans residues 345-365 (LFSEMLAASFSIAVVAYAIAV). The Cytoplasmic portion of the chain corresponds to 366–384 (SVGKVYATKYDYTIDGNQE). Residues 385–405 (FIAFGISNIFSGFFSCFVATT) traverse the membrane as a helical segment. Residues 406–421 (ALSRTAVQESTGGKTQ) are Extracellular-facing. A helical transmembrane segment spans residues 422–442 (VAGIISAAIVMIAILALGKLL). Residues 443 to 448 (EPLQKS) are Cytoplasmic-facing. The chain crosses the membrane as a helical span at residues 449–469 (VLAAVVIANLKGMFMQLCDIP). Over 470–486 (RLWRQNKIDAVIWVFTC) the chain is Extracellular. The helical transmembrane segment at 487-507 (IVSIILGLDLGLLAGLIFGLL) threads the bilayer. The Cytoplasmic portion of the chain corresponds to 508–780 (TVVLRVQFPS…QDEAMRTLAS (273 aa)). Residues 535-729 (NYKNIEEPQG…LTVHDAILYL (195 aa)) form the STAS domain.

The protein belongs to the SLC26A/SulP transporter (TC 2.A.53) family. As to quaternary structure, interacts with IQGAP1; this interaction enhances the chloride-bicarbonate exchange activity of SLC26A4. Highly expressed in the kidney (at protein level). High expression in adult thyroid, lower expression in adult and fetal kidney and fetal brain. Not expressed in other tissues.

The protein resides in the cell membrane. Its subcellular location is the apical cell membrane. The catalysed reaction is chloride(in) = chloride(out). The enzyme catalyses iodide(out) = iodide(in). It catalyses the reaction hydrogencarbonate(in) + chloride(out) = hydrogencarbonate(out) + chloride(in). It carries out the reaction iodide(in) + hydrogencarbonate(out) = iodide(out) + hydrogencarbonate(in). The catalysed reaction is iodide(in) + chloride(out) = iodide(out) + chloride(in). The enzyme catalyses formate(in) + chloride(out) = formate(out) + chloride(in). Functionally, sodium-independent transporter of chloride and iodide. Mediates electroneutral chloride-bicarbonate, chloride-iodide and chloride-formate exchange with 1:1 stoichiometry. Mediates electroneutral iodide-bicarbonate exchange. The sequence is that of Pendrin (SLC26A4) from Homo sapiens (Human).